A 200-amino-acid chain; its full sequence is Potassium-transporting ATPase KdpC subunit (200 aa).

Residues 6-26 form a helical membrane-spanning segment; it reads PALVLLILLTLITGIAYPLLT.

The protein belongs to the KdpC family. The system is composed of three essential subunits: KdpA, KdpB and KdpC.

The protein localises to the cell inner membrane. Its function is as follows. Part of the high-affinity ATP-driven potassium transport (or Kdp) system, which catalyzes the hydrolysis of ATP coupled with the electrogenic transport of potassium into the cytoplasm. This subunit acts as a catalytic chaperone that increases the ATP-binding affinity of the ATP-hydrolyzing subunit KdpB by the formation of a transient KdpB/KdpC/ATP ternary complex. The chain is Potassium-transporting ATPase KdpC subunit from Yersinia pseudotuberculosis serotype O:1b (strain IP 31758).